The chain runs to 157 residues: Phosphopantetheine adenylyltransferase (157 aa).

Belongs to the eukaryotic CoaD family.

The protein localises to the cytoplasm. It carries out the reaction (R)-4'-phosphopantetheine + ATP + H(+) = 3'-dephospho-CoA + diphosphate. It participates in cofactor biosynthesis; coenzyme A biosynthesis. Functionally, reversibly transfers an adenylyl group from ATP to 4'-phosphopantetheine, yielding dephospho-CoA (dPCoA) and pyrophosphate. The chain is Phosphopantetheine adenylyltransferase from Methanopyrus kandleri (strain AV19 / DSM 6324 / JCM 9639 / NBRC 100938).